A 791-amino-acid chain; its full sequence is Sphingomyelin phosphodiesterase 4 (791 aa).

The helical transmembrane segment at 755-775 (LFALLSFGLFSSTGLILIISF) threads the bilayer.

Mg(2+) is required as a cofactor.

The protein resides in the endoplasmic reticulum membrane. Its subcellular location is the golgi apparatus membrane. It is found in the nucleus envelope. It localises to the cell membrane. The protein localises to the sarcolemma. The enzyme catalyses a sphingomyelin + H2O = phosphocholine + an N-acylsphing-4-enine + H(+). In terms of biological role, catalyzes the hydrolysis of membrane sphingomyelin to form phosphorylcholine and ceramide. It has a relevant role in the homeostasis of membrane sphingolipids, thereby influencing membrane integrity, and endoplasmic reticulum organization and function. May sensitize cells to DNA damage-induced apoptosis. This chain is Sphingomyelin phosphodiesterase 4 (smpd4), found in Danio rerio (Zebrafish).